The sequence spans 372 residues: NAD(P)H-quinone oxidoreductase subunit 1 (372 aa).

8 helical membrane passes run 29–49 (WIPF…LVVV), 97–117 (WLFT…YLIV), 130–150 (VGIF…LMAG), 176–196 (LALS…IDIV), 204–224 (ILGW…IAAL), 254–274 (FALF…VFAI), 308–328 (SLGI…AVLM), and 347–367 (FLLP…LAFP).

The protein belongs to the complex I subunit 1 family. NDH-1 is composed of at least 11 different subunits.

The protein resides in the cellular thylakoid membrane. The enzyme catalyses a plastoquinone + NADH + (n+1) H(+)(in) = a plastoquinol + NAD(+) + n H(+)(out). The catalysed reaction is a plastoquinone + NADPH + (n+1) H(+)(in) = a plastoquinol + NADP(+) + n H(+)(out). NDH-1 shuttles electrons from an unknown electron donor, via FMN and iron-sulfur (Fe-S) centers, to quinones in the respiratory and/or the photosynthetic chain. The immediate electron acceptor for the enzyme in this species is believed to be plastoquinone. Couples the redox reaction to proton translocation, and thus conserves the redox energy in a proton gradient. In Crocosphaera subtropica (strain ATCC 51142 / BH68) (Cyanothece sp. (strain ATCC 51142)), this protein is NAD(P)H-quinone oxidoreductase subunit 1.